Reading from the N-terminus, the 358-residue chain is tRNA-specific 2-thiouridylase MnmA (358 aa).

Residues 7-14 and Met33 contribute to the ATP site; that span reads AMSGGVDS. Catalysis depends on Cys102, which acts as the Nucleophile. The cysteines at positions 102 and 199 are disulfide-linked. Gly126 is an ATP binding site. Residues 149 to 151 are interaction with tRNA; that stretch reads KDQ. Cys199 acts as the Cysteine persulfide intermediate in catalysis. An interaction with tRNA region spans residues 305-306; the sequence is RY.

It belongs to the MnmA/TRMU family.

The protein localises to the cytoplasm. It carries out the reaction S-sulfanyl-L-cysteinyl-[protein] + uridine(34) in tRNA + AH2 + ATP = 2-thiouridine(34) in tRNA + L-cysteinyl-[protein] + A + AMP + diphosphate + H(+). In terms of biological role, catalyzes the 2-thiolation of uridine at the wobble position (U34) of tRNA, leading to the formation of s(2)U34. This chain is tRNA-specific 2-thiouridylase MnmA, found in Halothermothrix orenii (strain H 168 / OCM 544 / DSM 9562).